Consider the following 633-residue polypeptide: Chaperone protein dnaK2 (633 aa).

Thr-197 is subject to Phosphothreonine; by autocatalysis. The segment covering Ala-513–Gln-532 has biased composition (basic and acidic residues). Disordered regions lie at residues Ala-513 to Asp-534 and Gln-598 to Lys-633. Over residues Pro-606–Asp-619 the composition is skewed to low complexity. Acidic residues predominate over residues Gly-620 to Lys-633.

It belongs to the heat shock protein 70 family.

In terms of biological role, acts as a chaperone. This Nostoc sp. (strain PCC 7120 / SAG 25.82 / UTEX 2576) protein is Chaperone protein dnaK2 (dnaK2).